A 1456-amino-acid chain; its full sequence is MAKVREVYQSFTDSTTKTLIQDEAYRNIRPIMEKHKLSNPYAQTVEAANDLEGFGIATNPYSIELHTHAAAKTIENKLLEVLGSLLPQEPVTFMFLKPRKLNFMRRNPRIKDIFHNVAIEPRDVARYPKETIIHKLAEIKTDTAYISDTLHFLDPSYIVETFQNCPKLQTLYATLVLPVEAAFKMESTHPNIYSLKYFGDGFQYIPGNHGGGAYHHEFSHLQSVKVGKIKWRDPKDGLLGHLNYTHEQVDTHTVTVQLQESFAANHLYCIRRGNMMTPEVRTFGQPDRYVLPPQIFLPKVHNCKKPILKKTMMQLFLYVRTVKVAKNCDIFAKIRQLIKSSDLDKFSAVELVYLVSYMEFLAALQATTCFSDTLSGGLLTKTLAPVRAWIQEKKMQLCGLEDYAKLVKAVDWRPVDFSFKVETWDFRFNPLGMWKAFQPSELSDVEEMNNFFDDGDLLDCFTRMPAYAVNAEEDLAGMRGDNQGETSTAPREPEGDKKEYVNPAETFLDKLTRKHNRETKSRAAKKAKRLAEIQDSINRDQTEEESQGAPNMGEAPSNAELPGTNGAGAGTTFPTLKALPQKWEDASFTDSSMTDQMEIMPGKEAVEVATQKVVDELPWKHWLPQLNAVGFKALEIQRDRNGTMIMPITEMVFELDKEEFPEGTPEALARELKAMNRSPTTIPLDLLRARDYGSDVKNKRIGAITKTQAASWGEYLTGKIESLPERKVAACVIHGAGGSGKSHAIQKALREIGKGSDITVVLPTNELRLDWSKKVPNTEPYMFKTYEKALIGGTGSIVIFDDYSKLPPGYIEALVSFSTKIKLIILTGDSRQSVYHETSDDASIRHLGPATEVFAKYCRYYLNATHRNKKDLANMLGVYSERTGTTEISMSSEFLEGVPTLVPSDEKRKLYMGTGRNDTFTYAGCQGLTKPKVQIVLDHNTQVCSANVMYTALSRATDRIHFINTSANSSAFWEKLDSTPYLKTFLSVVREQALREYEPVEAEPIREPEPQTHMCVENEESVLEEYKEELLEKFDREIHSEAHGHSNCVQTEDTTVQLFSHQQAKDETLLWATIDARLKTSNQESNFREFLSKRDIGDVLFLNYQRAMGLPKEPIPFSQEVWEACAHEVQSKYLSKSKCNLINGTVRQSPDFDENKIMVFLKSQWVTKVEKLGLPKIKPGQTIAAFYQQTVMLFGTMARYMRWFRQAFQPKEVFINCETTPEDMSAWALSNWNFTRPSLANDYTAFDQSQDGAMLQFEVLKAKHHCIPEEIIQAYIDIKTNAQIFLGTLSIMRLTGEGPTFDANTECNIAFTHTKFDIPAGTAQVYAGDDSALDCVPEIKQSFHRLEDKLLLKSKPVITQQKKGSWPEFCGWLITPKGVMKDPIKLHVSLKLAEAKGELKKCQDSYEIDLSYAYDHKDSLHDLFDEKQCQAHTLTCRTLIKSGRGTVSLPRLRNFL.

The 167-residue stretch at 59 to 225 folds into the Alphavirus-like MT domain; the sequence is NPYSIELHTH…HEFSHLQSVK (167 aa). 2 disordered regions span residues 474 to 500 and 512 to 571; these read DLAGMRGDNQGETSTAPREPEGDKKEY and TRKH…GAGT. Residues 491–500 show a composition bias toward basic and acidic residues; it reads REPEGDKKEY. Positions 512–528 are enriched in basic residues; that stretch reads TRKHNRETKSRAAKKAK. Basic and acidic residues predominate over residues 529–541; sequence RLAEIQDSINRDQ. The 168-residue stretch at 695–862 folds into the (+)RNA virus helicase ATP-binding domain; it reads DVKNKRIGAI…VFAKYCRYYL (168 aa). 735-742 contributes to the ATP binding site; it reads GAGGSGKS. The region spanning 863-997 is the (+)RNA virus helicase C-terminal domain; sequence NATHRNKKDL…VVREQALREY (135 aa). The RdRp catalytic domain occupies 1236-1343; sequence RPSLANDYTA…DCVPEIKQSF (108 aa).

The protein belongs to the potexvirus/carlavirus RNA replication protein family.

The enzyme catalyses RNA(n) + a ribonucleoside 5'-triphosphate = RNA(n+1) + diphosphate. It carries out the reaction ATP + H2O = ADP + phosphate + H(+). Its function is as follows. RNA replication. The central part of this protein possibly functions as an ATP-binding helicase. The polypeptide is RNA replication protein (Potato virus X (strain HB) (PVX)).